Here is a 414-residue protein sequence, read N- to C-terminus: Eukaryotic initiation factor 4A (414 aa).

Residues 41 to 69 (ESFDDMGLQENLLRGIYAYGFEKPSAIQQ) carry the Q motif motif. The 171-residue stretch at 72–242 (IVPFCKGLDV…RKFMNKPVRI (171 aa)) folds into the Helicase ATP-binding domain. 85–92 (AQSGTGKT) is a binding site for ATP. The DEAD box signature appears at 190–193 (DEAD). The region spanning 253–414 (GIKQFYVNVE…ELPANVADLL (162 aa)) is the Helicase C-terminal domain.

The protein belongs to the DEAD box helicase family. eIF4A subfamily. As to quaternary structure, eIF4F is a multi-subunit complex, the composition of which varies with external and internal environmental conditions. It is composed of at least EIF4A, EIF4E and EIF4G.

The catalysed reaction is ATP + H2O = ADP + phosphate + H(+). Its function is as follows. ATP-dependent RNA helicase which is a subunit of the eIF4F complex involved in cap recognition and is required for mRNA binding to ribosome. In the current model of translation initiation, eIF4A unwinds RNA secondary structures in the 5'-UTR of mRNAs which is necessary to allow efficient binding of the small ribosomal subunit, and subsequent scanning for the initiator codon. This Triticum aestivum (Wheat) protein is Eukaryotic initiation factor 4A.